Here is a 107-residue protein sequence, read N- to C-terminus: ATPase inhibitor, mitochondrial (107 aa).

A mitochondrion-targeting transit peptide spans 1–25 (MAGSALAVRARLGVWGMRVLQTRGF). The segment at 25-58 (FGSDSSESMDSGAGSIREAGGAFGKREKAEEDRY) is disordered. An N-terminal inhibitory region region spans residues 26-52 (GSDSSESMDSGAGSIREAGGAFGKREK). Ser39 is modified (phosphoserine). The span at 48–58 (GKREKAEEDRY) shows a compositional bias: basic and acidic residues. The stretch at 60 to 107 (REKTREQLAALKKHHEDEIDHHSKEIERLQKQIERHKKKIKYLKNSEH) forms a coiled coil. The segment at 74–106 (HEDEIDHHSKEIERLQKQIERHKKKIKYLKNSE) is antiparallel alpha-helical coiled coil region. Lys103 carries the post-translational modification N6-succinyllysine.

It belongs to the ATPase inhibitor family. In terms of assembly, homodimer; represents the active form and is present at a pH value below 6.5. Homotetramer; represents the inactive form and is present at a pH value above 7.0.

It is found in the mitochondrion. Its function is as follows. Endogenous F(1)F(o)-ATPase inhibitor limiting ATP depletion when the mitochondrial membrane potential falls below a threshold and the F(1)F(o)-ATP synthase starts hydrolyzing ATP to pump protons out of the mitochondrial matrix. Required to avoid the consumption of cellular ATP when the F(1)F(o)-ATP synthase enzyme acts as an ATP hydrolase. Indirectly acts as a regulator of heme synthesis in erythroid tissues: regulates heme synthesis by modulating the mitochondrial pH and redox potential, allowing FECH to efficiently catalyze the incorporation of iron into protoporphyrin IX to produce heme. The protein is ATPase inhibitor, mitochondrial of Rattus norvegicus (Rat).